Here is an 890-residue protein sequence, read N- to C-terminus: Nitrate reductase [NADH] 2 (890 aa).

A Mo-molybdopterin-binding site is contributed by C165. A Cytochrome b5 heme-binding domain is found at 513-588 (SKMFSVSEVK…LEDYRIGELI (76 aa)). 2 residues coordinate heme: H548 and H571. Residues 634–746 (RQKIPCKLVS…KGPLGHIEYT (113 aa)) enclose the FAD-binding FR-type domain. FAD is bound by residues 686–689 (RAYT), 703–707 (LIKVY), F708, F715, 720–722 (LMS), and T773.

The protein belongs to the nitrate reductase family. As to quaternary structure, homodimer. FAD is required as a cofactor. Requires heme as cofactor. It depends on Mo-molybdopterin as a cofactor.

The catalysed reaction is nitrite + NAD(+) + H2O = nitrate + NADH + H(+). Functionally, nitrate reductase is a key enzyme involved in the first step of nitrate assimilation in plants, fungi and bacteria. The sequence is that of Nitrate reductase [NADH] 2 (NIA2) from Phaseolus vulgaris (Kidney bean).